The primary structure comprises 305 residues: UDP-3-O-acyl-N-acetylglucosamine deacetylase (305 aa).

His79, His238, and Asp242 together coordinate Zn(2+). The Proton donor role is filled by His265.

The protein belongs to the LpxC family. It depends on Zn(2+) as a cofactor.

It catalyses the reaction a UDP-3-O-[(3R)-3-hydroxyacyl]-N-acetyl-alpha-D-glucosamine + H2O = a UDP-3-O-[(3R)-3-hydroxyacyl]-alpha-D-glucosamine + acetate. It functions in the pathway glycolipid biosynthesis; lipid IV(A) biosynthesis; lipid IV(A) from (3R)-3-hydroxytetradecanoyl-[acyl-carrier-protein] and UDP-N-acetyl-alpha-D-glucosamine: step 2/6. Catalyzes the hydrolysis of UDP-3-O-myristoyl-N-acetylglucosamine to form UDP-3-O-myristoylglucosamine and acetate, the committed step in lipid A biosynthesis. This Colwellia psychrerythraea (strain 34H / ATCC BAA-681) (Vibrio psychroerythus) protein is UDP-3-O-acyl-N-acetylglucosamine deacetylase.